A 382-amino-acid polypeptide reads, in one-letter code: Phenylalanine dehydrogenase (382 aa).

Position 54 (arginine 54) interacts with NAD(+). Lysine 78 provides a ligand contact to L-phenylalanine. Residue lysine 90 is the Proton donor/acceptor of the active site. NAD(+) is bound by residues aspartate 125, serine 156, threonine 160, 190–196, 213–214, 253–254, and 274–276; these read GLGKVGY, DI, AF, and SAN. Asparagine 276 contributes to the L-phenylalanine binding site.

This sequence belongs to the Glu/Leu/Phe/Val dehydrogenases family.

It catalyses the reaction L-phenylalanine + NAD(+) + H2O = 3-phenylpyruvate + NH4(+) + NADH + H(+). Activity is not affected by the metal chelating agent EDTA. Addition of 1 mM Mg(2+) results in 15% increase in activity, while the enzyme is strongly inhibited by 1 mM Fe(3+), Fe(2+), Cu(2+), Zn(2+) and Ag(+). Catalyzes the reversible NAD(+)-dependent oxidative deamination of L-phenylalanine to phenylpyruvate. Can also catalyze the oxidative deamination of several other amino acids, with much lower efficiency. Shows activity towards various bulky aromatic alpha-keto acids/esters and (S)-amine alcohols. Can catalyze the amination of 3-(2-chlorophenyl)-2-oxopropionic acid (CPOA) to produce 2-chloro-L-phenylalanine (2-Cl-Phe), a chemical compound used in the pharmaceutical and biotechnology industries. Shows a preference for amination over deamination. The polypeptide is Phenylalanine dehydrogenase (Bacillus thermotolerans (Quasibacillus thermotolerans)).